Reading from the N-terminus, the 359-residue chain is Probable NAD(P)H nitroreductase PigM (359 aa).

The protein belongs to the nitroreductase family. The cofactor is FMN.

The protein operates within antibiotic biosynthesis; prodigiosin biosynthesis. Its function is as follows. Involved in the biosynthesis of 4-methoxy-2,2'-bipyrrole-5-carbaldehyde (MBC), one of the terminal products involved in the biosynthesis of the red antibiotic prodigiosin (Pig). Catalyzes the oxidation of the hydroxy group of 4-hydroxy-2,2'-bipyrrole-5-methanol (HBM) to yield 4-methoxy-2,2'-bipyrrole-5-carbaldehyde (MBC). In Serratia sp. (strain ATCC 39006) (Prodigiosinella confusarubida), this protein is Probable NAD(P)H nitroreductase PigM.